A 256-amino-acid polypeptide reads, in one-letter code: Hydroxyacylglutathione hydrolase (256 aa).

Residues His-53, His-55, Asp-57, His-58, His-111, Asp-128, and His-166 each contribute to the Zn(2+) site.

The protein belongs to the metallo-beta-lactamase superfamily. Glyoxalase II family. Monomer. It depends on Zn(2+) as a cofactor.

The enzyme catalyses an S-(2-hydroxyacyl)glutathione + H2O = a 2-hydroxy carboxylate + glutathione + H(+). It participates in secondary metabolite metabolism; methylglyoxal degradation; (R)-lactate from methylglyoxal: step 2/2. Thiolesterase that catalyzes the hydrolysis of S-D-lactoyl-glutathione to form glutathione and D-lactic acid. The protein is Hydroxyacylglutathione hydrolase of Thiobacillus denitrificans (strain ATCC 25259 / T1).